A 152-amino-acid polypeptide reads, in one-letter code: Large ribosomal subunit protein bL9 (152 aa).

It belongs to the bacterial ribosomal protein bL9 family.

Binds to the 23S rRNA. The chain is Large ribosomal subunit protein bL9 from Saccharophagus degradans (strain 2-40 / ATCC 43961 / DSM 17024).